Consider the following 62-residue polypeptide: Large ribosomal subunit protein bL28 (62 aa).

The interval 1-28 (MARVCAITGRKARSGNSRSHAMNATKRK) is disordered.

Belongs to the bacterial ribosomal protein bL28 family.

The sequence is that of Large ribosomal subunit protein bL28 from Bacillus cytotoxicus (strain DSM 22905 / CIP 110041 / 391-98 / NVH 391-98).